Consider the following 67-residue polypeptide: ATP synthase protein 8 (67 aa).

Residues 8-24 (TWFITILSMLMTLFILF) traverse the membrane as a helical segment. Residue Lys-54 is modified to N6-acetyllysine; alternate. Lys-54 is subject to N6-succinyllysine; alternate. N6-acetyllysine is present on Lys-57.

It belongs to the ATPase protein 8 family. F-type ATPases have 2 components, CF(1) - the catalytic core - and CF(0) - the membrane proton channel. Component of an ATP synthase complex composed of ATP5PB, ATP5MC1, ATP5F1E, ATP5PD, ATP5ME, ATP5PF, ATP5MF, MT-ATP6, MT-ATP8, ATP5F1A, ATP5F1B, ATP5F1D, ATP5F1C, ATP5PO, ATP5MG, ATP5MK and ATP5MJ. Interacts with PRICKLE3.

The protein localises to the mitochondrion membrane. Functionally, mitochondrial membrane ATP synthase (F(1)F(0) ATP synthase or Complex V) produces ATP from ADP in the presence of a proton gradient across the membrane which is generated by electron transport complexes of the respiratory chain. F-type ATPases consist of two structural domains, F(1) - containing the extramembraneous catalytic core and F(0) - containing the membrane proton channel, linked together by a central stalk and a peripheral stalk. During catalysis, ATP synthesis in the catalytic domain of F(1) is coupled via a rotary mechanism of the central stalk subunits to proton translocation. Part of the complex F(0) domain. Minor subunit located with subunit a in the membrane. The protein is ATP synthase protein 8 (MT-ATP8) of Vicugna pacos (Alpaca).